The primary structure comprises 304 residues: ATP phosphoribosyltransferase (304 aa).

Belongs to the ATP phosphoribosyltransferase family. Long subfamily. It depends on Mg(2+) as a cofactor.

The protein resides in the cytoplasm. It catalyses the reaction 1-(5-phospho-beta-D-ribosyl)-ATP + diphosphate = 5-phospho-alpha-D-ribose 1-diphosphate + ATP. It participates in amino-acid biosynthesis; L-histidine biosynthesis; L-histidine from 5-phospho-alpha-D-ribose 1-diphosphate: step 1/9. Its activity is regulated as follows. Feedback inhibited by histidine. In terms of biological role, catalyzes the condensation of ATP and 5-phosphoribose 1-diphosphate to form N'-(5'-phosphoribosyl)-ATP (PR-ATP). Has a crucial role in the pathway because the rate of histidine biosynthesis seems to be controlled primarily by regulation of HisG enzymatic activity. This chain is ATP phosphoribosyltransferase, found in Xanthomonas euvesicatoria pv. vesicatoria (strain 85-10) (Xanthomonas campestris pv. vesicatoria).